The chain runs to 134 residues: MVSQDFSREKRLLTPRHFKAVFDSPTGKVPGKNLLILARENGLDHPRLGLVIGKKSVKLAVQRNRLKRLMRDSFRLNQQLLAGLDIVIVARKGLGEIENPELHQHFGKLWKRLARSRPTPAVTANSAGVDSQDA.

The protein belongs to the RnpA family. Consists of a catalytic RNA component (M1 or rnpB) and a protein subunit.

The enzyme catalyses Endonucleolytic cleavage of RNA, removing 5'-extranucleotides from tRNA precursor.. Its function is as follows. RNaseP catalyzes the removal of the 5'-leader sequence from pre-tRNA to produce the mature 5'-terminus. It can also cleave other RNA substrates such as 4.5S RNA. The protein component plays an auxiliary but essential role in vivo by binding to the 5'-leader sequence and broadening the substrate specificity of the ribozyme. The sequence is that of Ribonuclease P protein component from Pseudomonas putida (strain ATCC 700007 / DSM 6899 / JCM 31910 / BCRC 17059 / LMG 24140 / F1).